The chain runs to 967 residues: Phosphatidylserine decarboxylase proenzyme 3 (967 aa).

The tract at residues 217–255 (FIAEPDSSIPPSESSVSISTDTGKETPPSKSKKSSNQPY) is disordered. Residues 220–237 (EPDSSIPPSESSVSISTD) show a composition bias toward low complexity. The 124-residue stretch at 250-373 (SSNQPYVSIG…SSAQVDPETG (124 aa)) folds into the C2 domain. Ca(2+) contacts are provided by D343, S346, and D349. A compositionally biased stretch (low complexity) spans 532 to 544 (DQQATQTPQSPSS). The tract at residues 532–566 (DQQATQTPQSPSSNEESGPGTPTQTSDQYEDSEDS) is disordered. Residues 545–558 (NEESGPGTPTQTSD) show a composition bias toward polar residues. Catalysis depends on charge relay system; for autoendoproteolytic cleavage activity residues D769, H825, and S912. The active-site Schiff-base intermediate with substrate; via pyruvic acid; for decarboxylase activity is the S912. S912 is subject to Pyruvic acid (Ser); by autocatalysis. The segment at 947–967 (IGQKIDPNKPTDAEDHSKSDS) is disordered.

It belongs to the phosphatidylserine decarboxylase family. PSD-B subfamily. Eukaryotic type II sub-subfamily. Heterodimer of a large membrane-associated beta subunit and a small pyruvoyl-containing alpha subunit. The cofactor is pyruvate. Requires Ca(2+) as cofactor. Is synthesized initially as an inactive proenzyme. Formation of the active enzyme involves a self-maturation process in which the active site pyruvoyl group is generated from an internal serine residue via an autocatalytic post-translational modification. Two non-identical subunits are generated from the proenzyme in this reaction, and the pyruvate is formed at the N-terminus of the alpha chain, which is derived from the carboxyl end of the proenzyme. The autoendoproteolytic cleavage occurs by a canonical serine protease mechanism, in which the side chain hydroxyl group of the serine supplies its oxygen atom to form the C-terminus of the beta chain, while the remainder of the serine residue undergoes an oxidative deamination to produce ammonia and the pyruvoyl prosthetic group on the alpha chain. During this reaction, the Ser that is part of the protease active site of the proenzyme becomes the pyruvoyl prosthetic group, which constitutes an essential element of the active site of the mature decarboxylase.

Its subcellular location is the golgi apparatus membrane. It localises to the endosome membrane. It is found in the cytoplasm. The enzyme catalyses a 1,2-diacyl-sn-glycero-3-phospho-L-serine + H(+) = a 1,2-diacyl-sn-glycero-3-phosphoethanolamine + CO2. Its pathway is phospholipid metabolism; phosphatidylethanolamine biosynthesis; phosphatidylethanolamine from CDP-diacylglycerol: step 2/2. Its function is as follows. Catalyzes the formation of phosphatidylethanolamine (PtdEtn) from phosphatidylserine (PtdSer). Plays a central role in phospholipid metabolism and in the interorganelle trafficking of phosphatidylserine. Together with psd1 and psd2, responsible for the majority of phosphatidylethanolamine synthesis. The chain is Phosphatidylserine decarboxylase proenzyme 3 from Schizosaccharomyces pombe (strain 972 / ATCC 24843) (Fission yeast).